Consider the following 722-residue polypeptide: Tudor domain-containing protein 3 (722 aa).

The UBA domain maps to 264 to 304 (LVDEKALRHITEMGFSKEASRQALMDNGNNLEAALNVLLNS). Disordered regions lie at residues 305–342 (NKQKPVTGPPLRGKGKGRGRIRSEDEEELGNARPSAPS), 355–453 (LSVE…RSYS), and 470–526 (SDTV…HFYD). At serine 327 the chain carries Phosphoserine. A compositionally biased stretch (polar residues) spans 362–388 (SQPQQLHQGQNRVSNTEQNGVKDNNQP). Basic and acidic residues-rich tracts occupy residues 392 to 409 (PRNDTRQPRNEKPPRFQR) and 442 to 453 (AEERTKCDRSYS). A Glycyl lysine isopeptide (Lys-Gly) (interchain with G-Cter in SUMO2) cross-link involves residue lysine 541. Residues 626-686 (LWKSGDECLA…RPIQSEAWEE (61 aa)) enclose the Tudor domain. Over residues 695–704 (EFRRGGDGQP) the composition is skewed to basic and acidic residues. Residues 695–722 (EFRRGGDGQPRRSTRPTQQFYQPPRARN) form a disordered region. An EBM motif; may mediate interaction with the EJC region spans residues 702–722 (GQPRRSTRPTQQFYQPPRARN).

In terms of assembly, component of mRNA stress granules. Interacts with FMR1, FXR1, FXR2, EWSR1, FUS, SERBP1, EEF1A1 and DDX3X or DDX3Y, and with the small nuclear ribonucleoprotein-associated proteins SNRPB and SNRPN. Interacts with 'Lys-48'-linked tetra-ubiquitin, but not with monoubiquitin or 'Lys-63'-linked ubiquitin chains. May interact with the exon junction complex (EJC) composed at least of CASC3, EIF4A3, MAGOH and RBM8A. Interacts with POLR2A (via the C-terminal domain (CTD)).

The protein resides in the cytoplasm. It is found in the nucleus. Its function is as follows. Scaffolding protein that specifically recognizes and binds dimethylarginine-containing proteins. Plays a role in the regulation of translation of target mRNAs by binding Arg/Gly-rich motifs (GAR) in dimethylarginine-containing proteins. In nucleus, acts as a coactivator: recognizes and binds asymmetric dimethylation on the core histone tails associated with transcriptional activation (H3R17me2a and H4R3me2a) and recruits proteins at these arginine-methylated loci. In cytoplasm, acts as an antiviral factor that participates in the assembly of stress granules together with G3BP1. The polypeptide is Tudor domain-containing protein 3 (TDRD3) (Bos taurus (Bovine)).